The following is a 250-amino-acid chain: MEGGAALYNPRTVEEVFKDFKGRRTAIVKALTTDVQEFYQQCDPEKENLCLYGLPNEEWEVNLPAEEVPPELPEPALGINFARDGLSEKEWLSLVAIHSDAWLLSVSFYFGSRFSFHKEERKRLFNMINDVPTIFEVVTGMAKAKDKSSAANQNGNKSKSNSKVRTSEGKSSKTKQPKEEDEEIDEDDEDDHGETLCGACGDSDGADEFWICCDLCEKWFHGKCVKITPARAEHIKQYKCPSCSNKRARA.

Residue Met-1 is modified to N-acetylmethionine. A disordered region spans residues 146 to 192; the sequence is DKSSAANQNGNKSKSNSKVRTSEGKSSKTKQPKEEDEEIDEDDEDDH. Residues 149-163 are compositionally biased toward low complexity; sequence SAANQNGNKSKSNSK. Positions 179–192 are enriched in acidic residues; sequence EEDEEIDEDDEDDH. The PHD-type zinc finger occupies 194–246; that stretch reads ETLCGACGDSDGADEFWICCDLCEKWFHGKCVKITPARAEHIKQYKCPSCSNK.

The protein belongs to the Alfin family. Ubiquitously expressed.

It localises to the nucleus. Functionally, histone-binding component that specifically recognizes H3 tails trimethylated on 'Lys-4' (H3K4me3), which mark transcription start sites of virtually all active genes. The polypeptide is PHD finger protein ALFIN-LIKE 3 (AL3) (Arabidopsis thaliana (Mouse-ear cress)).